The primary structure comprises 315 residues: Lipoyl synthase (315 aa).

Residues Cys-62, Cys-67, Cys-73, Cys-88, Cys-92, Cys-95, and Ser-302 each contribute to the [4Fe-4S] cluster site. The 219-residue stretch at 73–291 folds into the Radical SAM core domain; sequence CFGHGTATFM…GELAKKLGFS (219 aa).

Belongs to the radical SAM superfamily. Lipoyl synthase family. It depends on [4Fe-4S] cluster as a cofactor.

The protein localises to the cytoplasm. The catalysed reaction is [[Fe-S] cluster scaffold protein carrying a second [4Fe-4S](2+) cluster] + N(6)-octanoyl-L-lysyl-[protein] + 2 oxidized [2Fe-2S]-[ferredoxin] + 2 S-adenosyl-L-methionine + 4 H(+) = [[Fe-S] cluster scaffold protein] + N(6)-[(R)-dihydrolipoyl]-L-lysyl-[protein] + 4 Fe(3+) + 2 hydrogen sulfide + 2 5'-deoxyadenosine + 2 L-methionine + 2 reduced [2Fe-2S]-[ferredoxin]. It functions in the pathway protein modification; protein lipoylation via endogenous pathway; protein N(6)-(lipoyl)lysine from octanoyl-[acyl-carrier-protein]: step 2/2. In terms of biological role, catalyzes the radical-mediated insertion of two sulfur atoms into the C-6 and C-8 positions of the octanoyl moiety bound to the lipoyl domains of lipoate-dependent enzymes, thereby converting the octanoylated domains into lipoylated derivatives. This chain is Lipoyl synthase, found in Coxiella burnetii (strain Dugway 5J108-111).